We begin with the raw amino-acid sequence, 349 residues long: ATP phosphoribosyltransferase regulatory subunit (349 aa).

The disordered stretch occupies residues 327–349 (GRGRGVRPRRASARGGRARARPR). Residues 330-349 (RGVRPRRASARGGRARARPR) are compositionally biased toward basic residues.

Belongs to the class-II aminoacyl-tRNA synthetase family. HisZ subfamily. Heteromultimer composed of HisG and HisZ subunits.

It localises to the cytoplasm. Its pathway is amino-acid biosynthesis; L-histidine biosynthesis; L-histidine from 5-phospho-alpha-D-ribose 1-diphosphate: step 1/9. Its function is as follows. Required for the first step of histidine biosynthesis. May allow the feedback regulation of ATP phosphoribosyltransferase activity by histidine. In Anaeromyxobacter dehalogenans (strain 2CP-1 / ATCC BAA-258), this protein is ATP phosphoribosyltransferase regulatory subunit.